We begin with the raw amino-acid sequence, 253 residues long: Phosphate import ATP-binding protein PstB 1 (253 aa).

Residues 7 to 248 enclose the ABC transporter domain; sequence LQIRDLSVYY…PKRKETEDYI (242 aa). Residue 39-46 participates in ATP binding; it reads GPSGSGKS.

Belongs to the ABC transporter superfamily. Phosphate importer (TC 3.A.1.7) family. As to quaternary structure, the complex is composed of two ATP-binding proteins (PstB), two transmembrane proteins (PstC and PstA) and a solute-binding protein (PstS).

The protein resides in the cell membrane. The catalysed reaction is phosphate(out) + ATP + H2O = ADP + 2 phosphate(in) + H(+). Part of the ABC transporter complex PstSACB involved in phosphate import. Responsible for energy coupling to the transport system. The polypeptide is Phosphate import ATP-binding protein PstB 1 (Streptococcus pyogenes serotype M2 (strain MGAS10270)).